We begin with the raw amino-acid sequence, 376 residues long: Succinyl-diaminopimelate desuccinylase (376 aa).

His66 is a Zn(2+) binding site. Asp68 is a catalytic residue. Asp99 is a Zn(2+) binding site. Glu133 (proton acceptor) is an active-site residue. Glu134, Glu162, and His348 together coordinate Zn(2+).

It belongs to the peptidase M20A family. DapE subfamily. In terms of assembly, homodimer. Requires Zn(2+) as cofactor. The cofactor is Co(2+).

The enzyme catalyses N-succinyl-(2S,6S)-2,6-diaminopimelate + H2O = (2S,6S)-2,6-diaminopimelate + succinate. Its pathway is amino-acid biosynthesis; L-lysine biosynthesis via DAP pathway; LL-2,6-diaminopimelate from (S)-tetrahydrodipicolinate (succinylase route): step 3/3. Functionally, catalyzes the hydrolysis of N-succinyl-L,L-diaminopimelic acid (SDAP), forming succinate and LL-2,6-diaminopimelate (DAP), an intermediate involved in the bacterial biosynthesis of lysine and meso-diaminopimelic acid, an essential component of bacterial cell walls. The chain is Succinyl-diaminopimelate desuccinylase from Xanthomonas oryzae pv. oryzae (strain MAFF 311018).